The primary structure comprises 321 residues: Malate dehydrogenase (321 aa).

Residues 10–15 and Asp34 contribute to the NAD(+) site; that span reads GSGMIG. Substrate-binding residues include Arg83 and Arg89. NAD(+)-binding positions include Asn96 and 119–121; that span reads ITN. Substrate contacts are provided by Asn121 and Arg152. Catalysis depends on His176, which acts as the Proton acceptor.

The protein belongs to the LDH/MDH superfamily. MDH type 3 family.

It catalyses the reaction (S)-malate + NAD(+) = oxaloacetate + NADH + H(+). Its function is as follows. Catalyzes the reversible oxidation of malate to oxaloacetate. This Sinorhizobium fredii (strain NBRC 101917 / NGR234) protein is Malate dehydrogenase.